The primary structure comprises 98 residues: uncharacterized protein (98 aa).

2 helical membrane-spanning segments follow: residues 14 to 34 (FLVI…PVTA) and 41 to 61 (MTGA…ASII).

The protein localises to the cell membrane. This is an uncharacterized protein from Haemophilus influenzae (strain ATCC 51907 / DSM 11121 / KW20 / Rd).